The following is a 159-amino-acid chain: ATP synthase subunit b 1 (159 aa).

A helical membrane pass occupies residues 5–25 (FWAFIGLILFLALLFYFKVPA).

The protein belongs to the ATPase B chain family. F-type ATPases have 2 components, F(1) - the catalytic core - and F(0) - the membrane proton channel. F(1) has five subunits: alpha(3), beta(3), gamma(1), delta(1), epsilon(1). F(0) has three main subunits: a(1), b(2) and c(10-14). The alpha and beta chains form an alternating ring which encloses part of the gamma chain. F(1) is attached to F(0) by a central stalk formed by the gamma and epsilon chains, while a peripheral stalk is formed by the delta and b chains.

Its subcellular location is the cell inner membrane. F(1)F(0) ATP synthase produces ATP from ADP in the presence of a proton or sodium gradient. F-type ATPases consist of two structural domains, F(1) containing the extramembraneous catalytic core and F(0) containing the membrane proton channel, linked together by a central stalk and a peripheral stalk. During catalysis, ATP synthesis in the catalytic domain of F(1) is coupled via a rotary mechanism of the central stalk subunits to proton translocation. Its function is as follows. Component of the F(0) channel, it forms part of the peripheral stalk, linking F(1) to F(0). The chain is ATP synthase subunit b 1 from Bartonella bacilliformis (strain ATCC 35685 / KC583 / Herrer 020/F12,63).